Reading from the N-terminus, the 228-residue chain is F-box protein At5g67140 (228 aa).

Positions glutamate 4–threonine 51 constitute an F-box domain.

This Arabidopsis thaliana (Mouse-ear cress) protein is F-box protein At5g67140.